The sequence spans 308 residues: Ribosomal RNA small subunit methyltransferase H (308 aa).

S-adenosyl-L-methionine-binding positions include G36 to H38, D55, F86, D103, and Q110.

Belongs to the methyltransferase superfamily. RsmH family.

The protein localises to the cytoplasm. It catalyses the reaction cytidine(1402) in 16S rRNA + S-adenosyl-L-methionine = N(4)-methylcytidine(1402) in 16S rRNA + S-adenosyl-L-homocysteine + H(+). Its function is as follows. Specifically methylates the N4 position of cytidine in position 1402 (C1402) of 16S rRNA. The protein is Ribosomal RNA small subunit methyltransferase H of Helicobacter pylori (strain B38).